Here is a 288-residue protein sequence, read N- to C-terminus: Peptidyl-tRNA hydrolase, chloroplastic (288 aa).

The transit peptide at 1–55 (MKAVAFPAKIANLSFPSNCCSLFFRSPATFLSPALPCRKLTKGIRGLEGLMSQCL) directs the protein to the chloroplast. Tyrosine 107 is a binding site for tRNA. Histidine 112 serves as the catalytic Proton acceptor. Residues phenylalanine 157, asparagine 159, and asparagine 205 each coordinate tRNA.

Belongs to the PTH family. In terms of assembly, monomer.

It is found in the plastid. It localises to the chloroplast stroma. It catalyses the reaction an N-acyl-L-alpha-aminoacyl-tRNA + H2O = an N-acyl-L-amino acid + a tRNA + H(+). Functionally, the natural substrate for this enzyme may be peptidyl-tRNAs which drop off the ribosome during protein synthesis. This is Peptidyl-tRNA hydrolase, chloroplastic from Arabidopsis thaliana (Mouse-ear cress).